Reading from the N-terminus, the 1111-residue chain is Putative leucine--tRNA ligase, cytoplasmic (1111 aa).

The 'HIGH' region motif lies at 74–84 (PYMNGALHLGH). Phosphoserine is present on Ser-460. Residues 737–741 (KMSKS) carry the 'KMSKS' region motif. An ATP-binding site is contributed by Lys-740.

Belongs to the class-I aminoacyl-tRNA synthetase family.

Its subcellular location is the cytoplasm. The enzyme catalyses tRNA(Leu) + L-leucine + ATP = L-leucyl-tRNA(Leu) + AMP + diphosphate. This Schizosaccharomyces pombe (strain 972 / ATCC 24843) (Fission yeast) protein is Putative leucine--tRNA ligase, cytoplasmic (lrs1).